The primary structure comprises 128 residues: U24-ctenitoxin-Pn1a (128 aa).

Thyroglobulin type-1 domains follow at residues 4–67 (KSDC…ECGC) and 72–127 (KERK…SLKC). 4 disulfide bridges follow: Cys7/Cys27, Cys38/Cys45, Cys47/Cys67, and Cys107/Cys127.

In terms of tissue distribution, expressed by the venom gland.

The protein localises to the secreted. Cysteine proteinase inhibitor. The chain is U24-ctenitoxin-Pn1a from Phoneutria nigriventer (Brazilian armed spider).